We begin with the raw amino-acid sequence, 265 residues long: Transcriptional repressor DcmR (265 aa).

Positions 17–36 (LDIKQAASLLNVSEASLRRW) form a DNA-binding region, H-T-H motif.

In terms of assembly, monomer.

Transcriptional repressor of the dcmA gene and of its own gene. The polypeptide is Transcriptional repressor DcmR (dcmR) (Methylorubrum extorquens (strain DSM 6343 / CIP 106787 / DM4) (Methylobacterium extorquens)).